The primary structure comprises 501 residues: Lysine--tRNA ligase (501 aa).

Residues Glu402 and Glu409 each contribute to the Mg(2+) site.

It belongs to the class-II aminoacyl-tRNA synthetase family. In terms of assembly, homodimer. It depends on Mg(2+) as a cofactor.

It is found in the cytoplasm. It carries out the reaction tRNA(Lys) + L-lysine + ATP = L-lysyl-tRNA(Lys) + AMP + diphosphate. The protein is Lysine--tRNA ligase (lysS) of Helicobacter pylori (strain ATCC 700392 / 26695) (Campylobacter pylori).